We begin with the raw amino-acid sequence, 74 residues long: Guanine nucleotide-binding protein G(T) subunit gamma-T1 (74 aa).

Cysteine methyl ester is present on C71. The S-farnesyl cysteine moiety is linked to residue C71. Residues 72–74 (VIS) constitute a propeptide, removed in mature form.

It belongs to the G protein gamma family. As to quaternary structure, g proteins are composed of 3 units, alpha, beta and gamma. In terms of tissue distribution, retinal rod outer segment.

Its subcellular location is the cell membrane. In terms of biological role, guanine nucleotide-binding proteins (G proteins) are involved as a modulator or transducer in various transmembrane signaling systems. The beta and gamma chains are required for the GTPase activity, for replacement of GDP by GTP, and for G protein-effector interaction. This Canis lupus familiaris (Dog) protein is Guanine nucleotide-binding protein G(T) subunit gamma-T1 (GNGT1).